The primary structure comprises 643 residues: Threonine--tRNA ligase (643 aa).

Residues 1–61 (MPIITLPDGS…SEDSSLEIIT (61 aa)) enclose the TGS domain. The tract at residues 243–534 (DHRRIGKALD…ITEEYAGFFP (292 aa)) is catalytic. Positions 334, 385, and 511 each coordinate Zn(2+).

This sequence belongs to the class-II aminoacyl-tRNA synthetase family. In terms of assembly, homodimer. Requires Zn(2+) as cofactor.

It localises to the cytoplasm. The catalysed reaction is tRNA(Thr) + L-threonine + ATP = L-threonyl-tRNA(Thr) + AMP + diphosphate + H(+). Catalyzes the attachment of threonine to tRNA(Thr) in a two-step reaction: L-threonine is first activated by ATP to form Thr-AMP and then transferred to the acceptor end of tRNA(Thr). Also edits incorrectly charged L-seryl-tRNA(Thr). This chain is Threonine--tRNA ligase, found in Actinobacillus pleuropneumoniae serotype 7 (strain AP76).